The chain runs to 156 residues: Small ribosomal subunit protein uS7 (156 aa).

The protein belongs to the universal ribosomal protein uS7 family. In terms of assembly, part of the 30S ribosomal subunit. Contacts proteins S9 and S11.

In terms of biological role, one of the primary rRNA binding proteins, it binds directly to 16S rRNA where it nucleates assembly of the head domain of the 30S subunit. Is located at the subunit interface close to the decoding center, probably blocks exit of the E-site tRNA. The protein is Small ribosomal subunit protein uS7 of Natranaerobius thermophilus (strain ATCC BAA-1301 / DSM 18059 / JW/NM-WN-LF).